The sequence spans 144 residues: Transcription antitermination protein NusB (144 aa).

Belongs to the NusB family.

In terms of biological role, involved in transcription antitermination. Required for transcription of ribosomal RNA (rRNA) genes. Binds specifically to the boxA antiterminator sequence of the ribosomal RNA (rrn) operons. The sequence is that of Transcription antitermination protein NusB from Streptococcus thermophilus (strain CNRZ 1066).